Consider the following 257-residue polypeptide: Hydroxyacylglutathione hydrolase (257 aa).

The Zn(2+) site is built by H58, H60, D62, H63, H116, D135, and H173.

It belongs to the metallo-beta-lactamase superfamily. Glyoxalase II family. As to quaternary structure, monomer. Requires Zn(2+) as cofactor.

The catalysed reaction is an S-(2-hydroxyacyl)glutathione + H2O = a 2-hydroxy carboxylate + glutathione + H(+). It participates in secondary metabolite metabolism; methylglyoxal degradation; (R)-lactate from methylglyoxal: step 2/2. Functionally, thiolesterase that catalyzes the hydrolysis of S-D-lactoyl-glutathione to form glutathione and D-lactic acid. This chain is Hydroxyacylglutathione hydrolase, found in Brucella melitensis biotype 1 (strain ATCC 23456 / CCUG 17765 / NCTC 10094 / 16M).